Here is a 144-residue protein sequence, read N- to C-terminus: MRLNTLSPSLGSRKNHKRLGRGIGSGFGKTAGRGHKGQKSRSGGHVNRGFEGGQMPIYRRIPKFGFNSRKKNITAEVRLSDISKLSTDIIDLKVLKKENIINKNIKYVKIILSGKLEVALTLHGLRVTRGARLAIENYGGKIEG.

Residues 1–12 show a composition bias toward polar residues; that stretch reads MRLNTLSPSLGS. Positions 1–51 are disordered; that stretch reads MRLNTLSPSLGSRKNHKRLGRGIGSGFGKTAGRGHKGQKSRSGGHVNRGFE. Gly residues predominate over residues 21 to 31; it reads RGIGSGFGKTA.

Belongs to the universal ribosomal protein uL15 family. As to quaternary structure, part of the 50S ribosomal subunit.

Functionally, binds to the 23S rRNA. The polypeptide is Large ribosomal subunit protein uL15 (Buchnera aphidicola subsp. Schizaphis graminum (strain Sg)).